Here is a 244-residue protein sequence, read N- to C-terminus: uncharacterized protein (244 aa).

2 consecutive transmembrane segments (helical) span residues 29–49 and 139–159; these read WIPW…TQHM and LGMK…ATVI.

It belongs to the FMP10 family.

The protein resides in the mitochondrion membrane. This is an uncharacterized protein from Saccharomyces cerevisiae (strain ATCC 204508 / S288c) (Baker's yeast).